A 344-amino-acid chain; its full sequence is Phosphoribosylformylglycinamidine cyclo-ligase (344 aa).

It belongs to the AIR synthase family.

The protein localises to the cytoplasm. It catalyses the reaction 2-formamido-N(1)-(5-O-phospho-beta-D-ribosyl)acetamidine + ATP = 5-amino-1-(5-phospho-beta-D-ribosyl)imidazole + ADP + phosphate + H(+). It functions in the pathway purine metabolism; IMP biosynthesis via de novo pathway; 5-amino-1-(5-phospho-D-ribosyl)imidazole from N(2)-formyl-N(1)-(5-phospho-D-ribosyl)glycinamide: step 2/2. The protein is Phosphoribosylformylglycinamidine cyclo-ligase of Haemophilus influenzae (strain 86-028NP).